A 115-amino-acid chain; its full sequence is MNRSLLAFAIVLVLLVAGTSSQLFNKSGNCPMRNTVTSCTPRCIGDGECSSNQKCCPNKCGTTSCANSSPLNTGSDGGYKGSSNQQAVYCNGVKCAAYEKCQYDRNTRRDKCTRV.

The signal sequence occupies residues Met-1–Ser-21. Residues Leu-23 to Ser-69 enclose the WAP domain. 4 cysteine pairs are disulfide-bonded: Cys-30–Cys-56, Cys-39–Cys-60, Cys-43–Cys-55, and Cys-49–Cys-65.

This sequence belongs to the venom waprin family. Cys-rich waprin subfamily. Expressed by the venom gland.

It is found in the secreted. In terms of biological role, antimicrobial peptides with activity against Gram-positive and Gram-negative bacteria as well as fungi. Recognizes carbohydrates in the microbial cell walls, and induces structural damage to them. Also inhibits microbial serine proteases, as well as mammalian elastases. Carbohydrates that are recognized are LPS, mannan, peptidoglycan, and N-acetl-D-glucosamine. The sequence is that of Waprin-like protein from Tetramorium bicarinatum (Tramp ant).